We begin with the raw amino-acid sequence, 404 residues long: cAMP-dependent protein kinase regulatory subunit (404 aa).

The segment at 14 to 144 is dimerization and phosphorylation; sequence LTDHELLRIP…RLKTAIAGNF (131 aa). Ser-105 bears the Phosphoserine mark. 3',5'-cyclic AMP contacts are provided by residues 145 to 276, Glu-223, Arg-232, 277 to 398, Glu-344, and Arg-353; these read LFSH…EKFP and CCRH…GVEE.

This sequence belongs to the cAMP-dependent kinase regulatory chain family. In terms of assembly, tetramer, composed of 2 regulatory (R) and 2 catalytic (C) subunits. In the presence of cAMP it dissociates into 2 active monomeric C subunits and an R dimer.

Functionally, cAMP-dependent protein kinase PKA regulatory subunit. The chain is cAMP-dependent protein kinase regulatory subunit (PKAR) from Colletotrichum trifolii.